Consider the following 318-residue polypeptide: Transaldolase (318 aa).

K132 (schiff-base intermediate with substrate) is an active-site residue.

Belongs to the transaldolase family. Type 1 subfamily. As to quaternary structure, homodimer.

The protein resides in the cytoplasm. The enzyme catalyses D-sedoheptulose 7-phosphate + D-glyceraldehyde 3-phosphate = D-erythrose 4-phosphate + beta-D-fructose 6-phosphate. The protein operates within carbohydrate degradation; pentose phosphate pathway; D-glyceraldehyde 3-phosphate and beta-D-fructose 6-phosphate from D-ribose 5-phosphate and D-xylulose 5-phosphate (non-oxidative stage): step 2/3. Transaldolase is important for the balance of metabolites in the pentose-phosphate pathway. The sequence is that of Transaldolase from Shewanella piezotolerans (strain WP3 / JCM 13877).